A 559-amino-acid polypeptide reads, in one-letter code: Formate--tetrahydrofolate ligase (559 aa).

67 to 74 (TPAGEGKS) provides a ligand contact to ATP.

This sequence belongs to the formate--tetrahydrofolate ligase family.

It catalyses the reaction (6S)-5,6,7,8-tetrahydrofolate + formate + ATP = (6R)-10-formyltetrahydrofolate + ADP + phosphate. Its pathway is one-carbon metabolism; tetrahydrofolate interconversion. The polypeptide is Formate--tetrahydrofolate ligase (Lactobacillus delbrueckii subsp. bulgaricus (strain ATCC BAA-365 / Lb-18)).